Here is a 392-residue protein sequence, read N- to C-terminus: Norsolorinic acid reductase B (392 aa).

Asp75 is an NADP(+) binding site. The active-site Proton donor is Tyr80. NADP(+) contacts are provided by residues 184–185 (SD), Gln210, 239–249 (GTLGQGSFQTE), and 311–319 (RKLEHIQGN). Residues 242 to 263 (GQGSFQTEEGRKQREKDNPGRK) form a disordered region. Residues 249-261 (EEGRKQREKDNPG) are compositionally biased toward basic and acidic residues.

Belongs to the aldo/keto reductase family. Aldo/keto reductase 2 subfamily.

It participates in mycotoxin biosynthesis. In terms of biological role, norsolorinic acid reductase; part of the fragmented gene cluster that mediates the biosynthesis of dothistromin (DOTH), a polyketide toxin very similar in structure to the aflatoxin precursor, versicolorin B. The first step of the pathway is the conversion of acetate to norsolorinic acid (NOR) and requires the fatty acid synthase subunits hexA and hexB, as well as the polyketide synthase pksA. PksA combines a hexanoyl starter unit and 7 malonyl-CoA extender units to synthesize the precursor NOR. The hexanoyl starter unit is provided to the acyl-carrier protein (ACP) domain by the fungal fatty acid synthase hexA/hexB. The second step is the conversion of NOR to averantin (AVN) and requires the norsolorinic acid ketoreductase nor1, which catalyzes the dehydration of norsolorinic acid to form (1'S)-averantin. The cytochrome P450 monooxygenase avnA then catalyzes the hydroxylation of AVN to 5'hydroxyaverantin (HAVN). The next step is performed by adhA that transforms HAVN to averufin (AVF). Averufin might then be converted to hydroxyversicolorone by cypX and avfA. Hydroxyversicolorone is further converted versiconal hemiacetal acetate (VHA) by moxY. VHA is then the substrate for the versiconal hemiacetal acetate esterase est1 to yield versiconal (VAL). Versicolorin B synthase vbsA then converts VAL to versicolorin B (VERB) by closing the bisfuran ring. Then, the activity of the versicolorin B desaturase verB leads to versicolorin A (VERA). DotB, a predicted chloroperoxidase, may perform epoxidation of the A-ring of VERA. Alternatively, a cytochrome P450, such as cypX or avnA could catalyze this step. It is also possible that another, uncharacterized, cytochrome P450 enzyme is responsible for this step. Opening of the epoxide could potentially be achieved by the epoxide hydrolase epoA. However, epoA seems not to be required for DOTH biosynthesis, but other epoxide hydrolases may have the ability to complement this hydrolysis. Alternatively, opening of the epoxide ring could be achieved non-enzymatically. The next step is the deoxygenation of ring A to yield the 5,8-dihydroxyanthraquinone which is most likely catalyzed by the NADPH dehydrogenase encoded by ver1. The last stages of DOTH biosynthesis are proposed to involve hydroxylation of the bisfuran. OrdB and norB might have oxidative roles here. An alternative possibility is that cytochrome P450 monoogenases such as avnA and cypX might perform these steps in addition to previously proposed steps. The chain is Norsolorinic acid reductase B from Dothistroma septosporum (strain NZE10 / CBS 128990) (Red band needle blight fungus).